Consider the following 333-residue polypeptide: 4-hydroxy-3-methylbut-2-enyl diphosphate reductase (333 aa).

C20 lines the [4Fe-4S] cluster pocket. Positions 49 and 82 each coordinate (2E)-4-hydroxy-3-methylbut-2-enyl diphosphate. 2 residues coordinate dimethylallyl diphosphate: H49 and H82. The isopentenyl diphosphate site is built by H49 and H82. [4Fe-4S] cluster is bound at residue C104. Residue H132 participates in (2E)-4-hydroxy-3-methylbut-2-enyl diphosphate binding. H132 serves as a coordination point for dimethylallyl diphosphate. H132 serves as a coordination point for isopentenyl diphosphate. Residue E134 is the Proton donor of the active site. T172 is a binding site for (2E)-4-hydroxy-3-methylbut-2-enyl diphosphate. C202 is a [4Fe-4S] cluster binding site. The (2E)-4-hydroxy-3-methylbut-2-enyl diphosphate site is built by S230, S231, N232, and S274. The dimethylallyl diphosphate site is built by S230, S231, N232, and S274. Isopentenyl diphosphate contacts are provided by S230, S231, N232, and S274.

Belongs to the IspH family. The cofactor is [4Fe-4S] cluster.

The enzyme catalyses isopentenyl diphosphate + 2 oxidized [2Fe-2S]-[ferredoxin] + H2O = (2E)-4-hydroxy-3-methylbut-2-enyl diphosphate + 2 reduced [2Fe-2S]-[ferredoxin] + 2 H(+). It carries out the reaction dimethylallyl diphosphate + 2 oxidized [2Fe-2S]-[ferredoxin] + H2O = (2E)-4-hydroxy-3-methylbut-2-enyl diphosphate + 2 reduced [2Fe-2S]-[ferredoxin] + 2 H(+). It functions in the pathway isoprenoid biosynthesis; dimethylallyl diphosphate biosynthesis; dimethylallyl diphosphate from (2E)-4-hydroxy-3-methylbutenyl diphosphate: step 1/1. Its pathway is isoprenoid biosynthesis; isopentenyl diphosphate biosynthesis via DXP pathway; isopentenyl diphosphate from 1-deoxy-D-xylulose 5-phosphate: step 6/6. In terms of biological role, catalyzes the conversion of 1-hydroxy-2-methyl-2-(E)-butenyl 4-diphosphate (HMBPP) into a mixture of isopentenyl diphosphate (IPP) and dimethylallyl diphosphate (DMAPP). Acts in the terminal step of the DOXP/MEP pathway for isoprenoid precursor biosynthesis. This is 4-hydroxy-3-methylbut-2-enyl diphosphate reductase from Polaromonas sp. (strain JS666 / ATCC BAA-500).